We begin with the raw amino-acid sequence, 419 residues long: Fusaric acid cluster transcription factor FUB10 (419 aa).

The zn(2)-C6 fungal-type DNA-binding region spans Cys16–Cys47. Positions Ser50–Met92 are disordered. A compositionally biased stretch (low complexity) spans Thr74–Ser86.

It is found in the nucleus. Functionally, transcription factor that regulates the expression of the gene cluster that mediates the biosynthesis of fusaric acid, a mycotoxin with low to moderate toxicity to animals and humans, but with high phytotoxic properties. The polypeptide is Fusaric acid cluster transcription factor FUB10 (Gibberella fujikuroi (strain CBS 195.34 / IMI 58289 / NRRL A-6831) (Bakanae and foot rot disease fungus)).